The following is a 269-amino-acid chain: Putative phosphatase M6_Spy0533 (269 aa).

Asp9 acts as the Nucleophile in catalysis. Asp9 lines the Mg(2+) pocket. Phosphate is bound at residue Ile10. Position 11 (Asp11) interacts with Mg(2+). Phosphate-binding positions include 43–44 and Lys196; that span reads TG. Asp219 is a binding site for Mg(2+). Asn222 serves as a coordination point for phosphate.

Mg(2+) serves as cofactor.

In Streptococcus pyogenes serotype M6 (strain ATCC BAA-946 / MGAS10394), this protein is Putative phosphatase M6_Spy0533.